The following is a 367-amino-acid chain: Leu/Ile/Val-binding protein BraC3 (367 aa).

The first 22 residues, 1–22, serve as a signal peptide directing secretion; sequence MTLKTLTATLVASLAFAPLAHA.

Belongs to the leucine-binding protein family. In terms of assembly, the complex is composed of two ATP-binding proteins (BraF and BraG), two transmembrane proteins (BraD and BraE) and a solute-binding protein (BraC or BraC3).

Its subcellular location is the periplasm. Functionally, part of the ABC transporter complex BraDEFGC/C3 involved in transport of branched-chain amino acids Leu, Ile and Val (LIV). Essential for the development of bacteroids, the differentiated legume-symbiotic forms of this bacterium, and for the effective N(2) fixation by them. This chain is Leu/Ile/Val-binding protein BraC3, found in Rhizobium johnstonii (strain DSM 114642 / LMG 32736 / 3841) (Rhizobium leguminosarum bv. viciae).